A 680-amino-acid polypeptide reads, in one-letter code: Harmonin-binding protein USHBP1 (680 aa).

Residues 1 to 15 are compositionally biased toward basic residues; that stretch reads MSARATRPRSRRGRH. 3 disordered regions span residues 1–101, 135–162, and 217–250; these read MSAR…GPAE, PVEA…GQQE, and ASPP…DSPM. Basic and acidic residues predominate over residues 76–86; the sequence is PEERREPEVEA. 3 coiled-coil regions span residues 177–219, 362–386, and 479–506; these read LGTR…EASP, ATNG…VAMD, and LADL…LRAQ. The tract at residues 524–562 is disordered; sequence LMGDGSSGGSSEDPSSEEEAGEDRQQHYQGPPALLGGQM. Positions 573-661 form a coiled coil; sequence QELSASLTRA…QQAEELAVLT (89 aa).

The protein belongs to the MCC family. As to quaternary structure, interacts via its C-terminus with the first PDZ domain of USH1C.

The sequence is that of Harmonin-binding protein USHBP1 from Rattus norvegicus (Rat).